The following is an 84-amino-acid chain: Large ribosomal subunit protein bL27 (84 aa).

Residues 1–25 (MAHKKGAGSTKNGRDSKPKMLGVKR) are disordered.

The protein belongs to the bacterial ribosomal protein bL27 family.

This chain is Large ribosomal subunit protein bL27, found in Dehalococcoides mccartyi (strain ATCC BAA-2266 / KCTC 15142 / 195) (Dehalococcoides ethenogenes (strain 195)).